Here is a 323-residue protein sequence, read N- to C-terminus: Olfactory receptor 2T35 (323 aa).

Residues 1-26 (MGMEGLLQNSTNFVLTGLITHPAFPG) lie on the Extracellular side of the membrane. An N-linked (GlcNAc...) asparagine glycan is attached at N9. Residues 27–50 (LLFAVVFSIFVVAITANLVMILLI) traverse the membrane as a helical segment. The Cytoplasmic segment spans residues 51 to 58 (HMDSRLHT). A helical membrane pass occupies residues 59–80 (PMYFLLSQLSIMDTIYICITVP). The Extracellular portion of the chain corresponds to 81–101 (KMLQDLLSKDKTISFLGCAVQ). Residues C98 and C189 are joined by a disulfide bond. The chain crosses the membrane as a helical span at residues 102 to 120 (IFYLTLIGGEFFLLGLMAY). At 121-139 (DRYVAVCNPLRYPLLMNRR) the chain is on the cytoplasmic side. The chain crosses the membrane as a helical span at residues 140 to 158 (VCLFMVVGSWVGGSLDGFM). At 159-195 (LTPVTMSFPFCRSREINHFFCEIPAVLKLSCTDTSLY) the chain is on the extracellular side. The helical transmembrane segment at 196-219 (ETLMYACCVLMLLIPLSVISVSYT) threads the bilayer. Over 220–236 (HILLTVHRMNSAEGRRK) the chain is Cytoplasmic. Residues 237 to 259 (AFATCSSHIMVVSVFYGAAFYTN) form a helical membrane-spanning segment. At 260–272 (VLPHSYHTPEKDK) the chain is on the extracellular side. Residues 273–292 (VVSAFYTILTPMLNPLIYSL) form a helical membrane-spanning segment. The Cytoplasmic portion of the chain corresponds to 293 to 323 (RNKDVAAALRKVLGRCGSSQSIRVATVIRKG).

This sequence belongs to the G-protein coupled receptor 1 family.

It is found in the cell membrane. Functionally, odorant receptor. This Homo sapiens (Human) protein is Olfactory receptor 2T35 (OR2T35).